The chain runs to 217 residues: Thiamine-phosphate synthase (217 aa).

4-amino-2-methyl-5-(diphosphooxymethyl)pyrimidine is bound by residues 38–42 and Asn70; that span reads QYRDK. Mg(2+) contacts are provided by Asp71 and Asp90. Residue Ser109 coordinates 4-amino-2-methyl-5-(diphosphooxymethyl)pyrimidine. Position 136 to 138 (136 to 138) interacts with 2-[(2R,5Z)-2-carboxy-4-methylthiazol-5(2H)-ylidene]ethyl phosphate; that stretch reads SIT. Lys139 contributes to the 4-amino-2-methyl-5-(diphosphooxymethyl)pyrimidine binding site. Gly166 is a binding site for 2-[(2R,5Z)-2-carboxy-4-methylthiazol-5(2H)-ylidene]ethyl phosphate.

It belongs to the thiamine-phosphate synthase family. It depends on Mg(2+) as a cofactor.

The catalysed reaction is 2-[(2R,5Z)-2-carboxy-4-methylthiazol-5(2H)-ylidene]ethyl phosphate + 4-amino-2-methyl-5-(diphosphooxymethyl)pyrimidine + 2 H(+) = thiamine phosphate + CO2 + diphosphate. The enzyme catalyses 2-(2-carboxy-4-methylthiazol-5-yl)ethyl phosphate + 4-amino-2-methyl-5-(diphosphooxymethyl)pyrimidine + 2 H(+) = thiamine phosphate + CO2 + diphosphate. It carries out the reaction 4-methyl-5-(2-phosphooxyethyl)-thiazole + 4-amino-2-methyl-5-(diphosphooxymethyl)pyrimidine + H(+) = thiamine phosphate + diphosphate. It functions in the pathway cofactor biosynthesis; thiamine diphosphate biosynthesis; thiamine phosphate from 4-amino-2-methyl-5-diphosphomethylpyrimidine and 4-methyl-5-(2-phosphoethyl)-thiazole: step 1/1. Condenses 4-methyl-5-(beta-hydroxyethyl)thiazole monophosphate (THZ-P) and 2-methyl-4-amino-5-hydroxymethyl pyrimidine pyrophosphate (HMP-PP) to form thiamine monophosphate (TMP). The protein is Thiamine-phosphate synthase of Nitrosococcus oceani (strain ATCC 19707 / BCRC 17464 / JCM 30415 / NCIMB 11848 / C-107).